The primary structure comprises 404 residues: Cysteine desulfurase IscS (404 aa).

Residues 75-76 (AT), Asn155, Gln183, and 203-205 (SAH) each bind pyridoxal 5'-phosphate. Lys206 carries the post-translational modification N6-(pyridoxal phosphate)lysine. A pyridoxal 5'-phosphate-binding site is contributed by Thr243. The Cysteine persulfide intermediate role is filled by Cys328. Cys328 lines the [2Fe-2S] cluster pocket.

The protein belongs to the class-V pyridoxal-phosphate-dependent aminotransferase family. NifS/IscS subfamily. Homodimer. Forms a heterotetramer with IscU, interacts with other sulfur acceptors. Pyridoxal 5'-phosphate serves as cofactor.

Its subcellular location is the cytoplasm. The enzyme catalyses (sulfur carrier)-H + L-cysteine = (sulfur carrier)-SH + L-alanine. It functions in the pathway cofactor biosynthesis; iron-sulfur cluster biosynthesis. In terms of biological role, master enzyme that delivers sulfur to a number of partners involved in Fe-S cluster assembly, tRNA modification or cofactor biosynthesis. Catalyzes the removal of elemental sulfur atoms from cysteine to produce alanine. Functions as a sulfur delivery protein for Fe-S cluster synthesis onto IscU, an Fe-S scaffold assembly protein, as well as other S acceptor proteins. The polypeptide is Cysteine desulfurase IscS (Buchnera aphidicola subsp. Schizaphis graminum (strain Sg)).